A 479-amino-acid polypeptide reads, in one-letter code: Mitochondria-eating protein (479 aa).

2 coiled-coil regions span residues 109-161 (ERKL…LATT) and 187-223 (LRRL…RIAR). Disordered regions lie at residues 220 to 251 (RIAR…GRAR) and 456 to 479 (RSRS…SRSR). The segment covering 235–249 (RSPSPLPLRSCSPGR) has biased composition (low complexity).

This sequence belongs to the MIEAP family.

It is found in the cytoplasm. Its subcellular location is the cytosol. The protein localises to the mitochondrion outer membrane. The protein resides in the mitochondrion matrix. Functionally, key regulator of mitochondrial quality that mediates the repairing or degradation of unhealthy mitochondria in response to mitochondrial damage. Mediator of mitochondrial protein catabolic process (also named MALM) by mediating the degradation of damaged proteins inside mitochondria by promoting the accumulation in the mitochondrial matrix of hydrolases that are characteristic of the lysosomal lumen. Also involved in mitochondrion degradation of damaged mitochondria by promoting the formation of vacuole-like structures (named MIV), which engulf and degrade unhealthy mitochondria by accumulating lysosomes. Binds cardiolipin. May form molecular condensates (non-membrane-bounded organelles) within mitochondria that compartmentalize and promote cardiolipin metabolism. The polypeptide is Mitochondria-eating protein (SPATA18) (Gallus gallus (Chicken)).